A 482-amino-acid polypeptide reads, in one-letter code: Putative L-cysteine desulfhydrase 1 (482 aa).

Residues Met-1–Ala-10 are compositionally biased toward acidic residues. The segment at Met-1–Ser-45 is disordered. A compositionally biased stretch (low complexity) spans Ala-11 to Gly-22. Lys-276 carries the N6-(pyridoxal phosphate)lysine modification.

This sequence belongs to the class-V pyridoxal-phosphate-dependent aminotransferase family. Requires pyridoxal 5'-phosphate as cofactor.

It carries out the reaction L-cysteine + H2O = hydrogen sulfide + pyruvate + NH4(+) + H(+). In terms of biological role, catalyzes the production of hydrogen sulfide (H2S) from cysteine. The sequence is that of Putative L-cysteine desulfhydrase 1 from Oryza sativa subsp. japonica (Rice).